A 289-amino-acid chain; its full sequence is Heterokaryon incompatibility protein S (289 aa).

The interval 1–227 (MSEPFEIVAG…KIDAIVGRNS (227 aa)) is globular domain. Residues 218-289 (KIDAIVGRNS…EYGGKGFWDN (72 aa)) are prion domain (PrD).

Homodimer. Forms heterodimers with het-s.

It is found in the cytoplasm. Its function is as follows. Responsible for heterokaryon incompatibility, a process that ensures that during spontaneous, vegetative cell fusion only compatible cells from the same colony survive (non-self-recognition). Interaction with the prion form [het-s] of incompatible cells triggers a lethal reaction that prevents the formation of viable heterokaryons. The sequence is that of Heterokaryon incompatibility protein S (het-S) from Podospora anserina (strain S / ATCC MYA-4624 / DSM 980 / FGSC 10383) (Pleurage anserina).